Here is a 446-residue protein sequence, read N- to C-terminus: Methanogenesis regulatory protein FilR1 (446 aa).

In terms of domain architecture, Response regulatory spans 297 to 416 (DVMIVEDDLG…QRLPEIAEEA (120 aa)). Residue D350 is modified to 4-aspartylphosphate.

In terms of processing, phosphorylated by FilI.

Its function is as follows. Member of the two-component regulatory system FilI/FilRs, which is involved in the regulation of methanogenesis. Regulates its own expression, expression of the filI-filR2 operon, and of genes involved in methanogenesis such as acs1, acs4 and mtrABC. Acts by binding to the promoters. The chain is Methanogenesis regulatory protein FilR1 from Methanothrix harundinacea (strain 6Ac) (Methanosaeta harundinacea).